Consider the following 388-residue polypeptide: Lipid-A-disaccharide synthase (388 aa).

The protein belongs to the LpxB family.

The enzyme catalyses a lipid X + a UDP-2-N,3-O-bis[(3R)-3-hydroxyacyl]-alpha-D-glucosamine = a lipid A disaccharide + UDP + H(+). The protein operates within bacterial outer membrane biogenesis; LPS lipid A biosynthesis. Its function is as follows. Condensation of UDP-2,3-diacylglucosamine and 2,3-diacylglucosamine-1-phosphate to form lipid A disaccharide, a precursor of lipid A, a phosphorylated glycolipid that anchors the lipopolysaccharide to the outer membrane of the cell. This Burkholderia mallei (strain ATCC 23344) protein is Lipid-A-disaccharide synthase.